Consider the following 70-residue polypeptide: Putative peptide YY-3 (70 aa).

Positions 1 to 23 (MVSVCRPWPAVAIALLALLVCLG) are cleaved as a signal peptide.

It belongs to the NPY family.

Its subcellular location is the secreted. This chain is Putative peptide YY-3 (PYY3), found in Homo sapiens (Human).